Here is an 81-residue protein sequence, read N- to C-terminus: ATP synthase subunit c (81 aa).

2 helical membrane passes run 7–27 (AASV…PGLG) and 57–77 (FAFM…LLFA).

It belongs to the ATPase C chain family. F-type ATPases have 2 components, F(1) - the catalytic core - and F(0) - the membrane proton channel. F(1) has five subunits: alpha(3), beta(3), gamma(1), delta(1), epsilon(1). F(0) has four main subunits: a(1), b(1), b'(1) and c(10-14). The alpha and beta chains form an alternating ring which encloses part of the gamma chain. F(1) is attached to F(0) by a central stalk formed by the gamma and epsilon chains, while a peripheral stalk is formed by the delta, b and b' chains.

Its subcellular location is the cellular thylakoid membrane. Functionally, f(1)F(0) ATP synthase produces ATP from ADP in the presence of a proton or sodium gradient. F-type ATPases consist of two structural domains, F(1) containing the extramembraneous catalytic core and F(0) containing the membrane proton channel, linked together by a central stalk and a peripheral stalk. During catalysis, ATP synthesis in the catalytic domain of F(1) is coupled via a rotary mechanism of the central stalk subunits to proton translocation. Key component of the F(0) channel; it plays a direct role in translocation across the membrane. A homomeric c-ring of between 10-14 subunits forms the central stalk rotor element with the F(1) delta and epsilon subunits. The polypeptide is ATP synthase subunit c (Prochlorococcus marinus (strain MIT 9301)).